We begin with the raw amino-acid sequence, 246 residues long: tRNA (guanine-N(1)-)-methyltransferase (246 aa).

Residues glycine 112 and 131–136 (IGDYVL) contribute to the S-adenosyl-L-methionine site.

Belongs to the RNA methyltransferase TrmD family. Homodimer.

Its subcellular location is the cytoplasm. The catalysed reaction is guanosine(37) in tRNA + S-adenosyl-L-methionine = N(1)-methylguanosine(37) in tRNA + S-adenosyl-L-homocysteine + H(+). In terms of biological role, specifically methylates guanosine-37 in various tRNAs. The chain is tRNA (guanine-N(1)-)-methyltransferase from Thermosipho africanus (strain TCF52B).